The primary structure comprises 684 residues: Glycine--tRNA ligase beta subunit (684 aa).

The protein belongs to the class-II aminoacyl-tRNA synthetase family. Tetramer of two alpha and two beta subunits.

Its subcellular location is the cytoplasm. It catalyses the reaction tRNA(Gly) + glycine + ATP = glycyl-tRNA(Gly) + AMP + diphosphate. The polypeptide is Glycine--tRNA ligase beta subunit (Pseudomonas syringae pv. tomato (strain ATCC BAA-871 / DC3000)).